Reading from the N-terminus, the 427-residue chain is Enolase (427 aa).

Glutamine 163 contacts (2R)-2-phosphoglycerate. Catalysis depends on glutamate 205, which acts as the Proton donor. Mg(2+) is bound by residues aspartate 242, glutamate 285, and aspartate 312. 4 residues coordinate (2R)-2-phosphoglycerate: lysine 337, arginine 366, serine 367, and lysine 388. Residue lysine 337 is the Proton acceptor of the active site.

Belongs to the enolase family. Mg(2+) is required as a cofactor.

The protein resides in the cytoplasm. Its subcellular location is the secreted. It localises to the cell surface. It carries out the reaction (2R)-2-phosphoglycerate = phosphoenolpyruvate + H2O. It functions in the pathway carbohydrate degradation; glycolysis; pyruvate from D-glyceraldehyde 3-phosphate: step 4/5. Functionally, catalyzes the reversible conversion of 2-phosphoglycerate (2-PG) into phosphoenolpyruvate (PEP). It is essential for the degradation of carbohydrates via glycolysis. In Methylocella silvestris (strain DSM 15510 / CIP 108128 / LMG 27833 / NCIMB 13906 / BL2), this protein is Enolase.